Reading from the N-terminus, the 485-residue chain is Pre-glycoprotein polyprotein GP complex (485 aa).

A lipid anchor (N-myristoyl glycine; by host) is attached at glycine 2. At 2-17 the chain is on the extracellular side; sequence GQFISFMQEIPTFLQE. The helical transmembrane segment at 18–33 threads the bilayer; that stretch reads ALNIALVAVSLIAIIK. Topologically, residues 34 to 58 are cytoplasmic; sequence GVVNLYKSGLFQFFVFLALAGRSCT. A Zn(2+)-binding site is contributed by cysteine 57. Residues 59 to 424 are Extracellular-facing; that stretch reads EEAFKIGLHT…QGKTPLTLVD (366 aa). Disulfide bonds link cysteine 92–cysteine 226, cysteine 135–cysteine 164, cysteine 207–cysteine 213, cysteine 271–cysteine 284, cysteine 293–cysteine 302, and cysteine 356–cysteine 377. 2 N-linked (GlcNAc...) asparagine; by host glycosylation sites follow: asparagine 95 and asparagine 105. 2 N-linked (GlcNAc...) asparagine; by host glycosylation sites follow: asparagine 166 and asparagine 178. Residues 250–286 are fusion; it reads LKAFFSWSLTDSSGKDTPGGYCLEEWMLVAAKMKCFG. Residues 287 to 355 form an HR1 region; it reads NTAVAKCNLN…KIRELMSVPY (69 aa). Asparagine 357, asparagine 365, asparagine 382, and asparagine 387 each carry an N-linked (GlcNAc...) asparagine; by host glycan. Positions 360-423 are HR2; that stretch reads KFWYVNHTLS…RQGKTPLTLV (64 aa). A helical membrane pass occupies residues 425 to 445; that stretch reads ICFWSTVFFTASLFLHLVGIP. The Cytoplasmic portion of the chain corresponds to 446-485; it reads THRHIRGEACPLPHRLNSLGGCRCGKYPNLKKPTVWRRGH. Residues histidine 447, histidine 449, cysteine 455, histidine 459, cysteine 467, cysteine 469, and histidine 485 each contribute to the Zn(2+) site.

The protein belongs to the arenaviridae GPC protein family. As to quaternary structure, interacts with glycoprotein G2. Part of the GP complex (GP-C) together with glycoprotein G1 and glycoprotein G2. The GP-complex interacts with protein Z, which interacts with ribonucleocapsid; these interactions may induce virion budding. In terms of assembly, homotrimer; disulfide-linked. In pre-fusion state, G1 homotrimers bind G2 homotrimers via ionic interactions. Part of the GP complex (GP-C) together with glycoprotein G2 and the stable signal peptide. Interacts with host TFRC. The GP-complex interacts with protein Z, which interacts with ribonucleocapsid; these interactions may induce virion budding. Homotrimer. Interacts with the stable signal peptide. In pre-fusion state, G2 homotrimers bind G1 homotrimers via ionic interactions. Part of the GP complex (GP-C) together with glycoprotein G1 and the stable signal peptide. Acidification in the endosome triggers rearrangements, which ultimately leads to a 6 helix bundle formed by the two heptad repeat domains (HR1 and HR2) in post-fusion state. The GP-complex interacts with protein Z, which interacts with ribonucleocapsid; these interactions may induce virion budding. Specific enzymatic cleavages in vivo yield mature proteins. GP-C polyprotein is cleaved in the endoplasmic reticulum by the host protease MBTPS1. Only cleaved glycoprotein is incorporated into virions. In terms of processing, the SSP remains stably associated with the GP complex following cleavage by signal peptidase and plays crucial roles in the trafficking of GP through the secretory pathway. Post-translationally, myristoylation is necessary for GP2-mediated fusion activity.

The protein resides in the virion membrane. Its subcellular location is the host endoplasmic reticulum membrane. It is found in the host Golgi apparatus membrane. It localises to the host cell membrane. Functions as a cleaved signal peptide that is retained as the third component of the GP complex (GP-C). Helps to stabilize the spike complex in its native conformation. The SSP is required for efficient glycoprotein expression, post-translational maturation cleavage of G1 and G2, glycoprotein transport to the cell surface plasma membrane, formation of infectious virus particles, and acid pH-dependent glycoprotein-mediated cell fusion. Functionally, forms the virion spikes together with glycoprotein G2. The glycoprotein spike trimers are connected to the underlying matrix. Mediates virus attachment to host TFRC. This attachment induces virion internalization predominantly through clathrin-mediated endocytosis. Its function is as follows. Forms the virion spikes together with glycoprotein G1. The glycoprotein spike trimers are connected to the underlying matrix. Class I viral fusion protein that directs fusion of viral and host endosomal membranes, leading to delivery of the nucleocapsid into the cytoplasm. Membrane fusion is mediated by irreversible conformational changes induced by acidification. The chain is Pre-glycoprotein polyprotein GP complex from Junin mammarenavirus (JUNV).